We begin with the raw amino-acid sequence, 659 residues long: Pollen receptor-like kinase 6 (659 aa).

Positions 1–26 are cleaved as a signal peptide; it reads MAAAVLNPGFFLLILLLSFSISPSLQ. Residues 27–266 are Extracellular-facing; sequence YVSESEPLVR…SVPETSNKAA (240 aa). Cys58 and Cys67 form a disulfide bridge. LRR repeat units follow at residues 95 to 118, 120 to 142, 143 to 167, 168 to 190, and 192 to 214; these read LPNL…FFKL, GLKS…FFKD, MSKL…ITQL, PQLE…EFGS, and KNLK…SIAD. Asn128 is a glycosylation site (N-linked (GlcNAc...) asparagine). N-linked (GlcNAc...) asparagine glycosylation occurs at Asn179. Asn221 carries N-linked (GlcNAc...) asparagine glycosylation. The tract at residues 226-242 is LURE peptides binding; that stretch reads EYLCGPVVDVGCENIEL. A disulfide bridge connects residues Cys229 and Cys237. The interval 241–260 is disordered; that stretch reads ELNDPQEGQPPSKPSSSVPE. Residues 267 to 287 form a helical membrane-spanning segment; sequence INAIMVSISLLLLFFIIVGVI. The Cytoplasmic segment spans residues 288–659; the sequence is KRRNKKKNPD…AVRRIEQVKT (372 aa). The disordered stretch occupies residues 312-354; sequence VRISESSSTTAKRSTDSSRKRGGHSDDGSTKKGVSNIGKGGNG. A compositionally biased stretch (basic and acidic residues) spans 324–341; it reads RSTDSSRKRGGHSDDGST. Residues 384–659 enclose the Protein kinase domain; sequence KAAAEVLGNG…AVRRIEQVKT (276 aa). ATP contacts are provided by residues 390 to 398 and Lys412; that span reads LGNGSLGSA. Phosphoserine is present on Ser464. 2 positions are modified to phosphothreonine: Thr484 and Thr557. Ser561 is modified (phosphoserine).

This sequence belongs to the protein kinase superfamily. Ser/Thr protein kinase family. In terms of assembly, interacts with ROPGEF8, ROPGEF9, ROPGEF12, ROPGEF13, PRK3, LIP1 and LIP2. Binds to LURE peptides via its LRR repeats; interacts with LURE1.1, LURE1.2, LURE1.3 and LURE1.4. Expressed specifically in the pollen tube, predominantly at the tip.

Its subcellular location is the cell membrane. The protein localises to the cytoplasmic granule. Functionally, key receptor for sensing species-specific attractants in cooperation with other pollen receptor-like kinases. Essential for pollen tube reorientation toward attractant peptides. In Arabidopsis thaliana (Mouse-ear cress), this protein is Pollen receptor-like kinase 6.